Reading from the N-terminus, the 128-residue chain is MSTLVSLPTAAPAPDYQSIDRPLNFSVAAAAKVRELIQEEGNADLALRVYIQGGGCSGFQYGFEFDENRAEDDLAVATDGVTLLVDPLSLQYLMGAEVDYTESLTGAQFVIRNPNAKTTCGCGSSFSV.

Residues C56, C120, and C122 each coordinate iron-sulfur cluster.

It belongs to the HesB/IscA family. As to quaternary structure, homodimer. Requires iron-sulfur cluster as cofactor.

In terms of biological role, required for insertion of 4Fe-4S clusters for at least IspG. In Xanthomonas axonopodis pv. citri (strain 306), this protein is Iron-sulfur cluster insertion protein ErpA.